The following is a 316-amino-acid chain: 4-hydroxy-3-methylbut-2-enyl diphosphate reductase (316 aa).

Cysteine 12 provides a ligand contact to [4Fe-4S] cluster. Residues histidine 41 and histidine 74 each contribute to the (2E)-4-hydroxy-3-methylbut-2-enyl diphosphate site. Residues histidine 41 and histidine 74 each contribute to the dimethylallyl diphosphate site. Positions 41 and 74 each coordinate isopentenyl diphosphate. Cysteine 96 contacts [4Fe-4S] cluster. Residue histidine 124 participates in (2E)-4-hydroxy-3-methylbut-2-enyl diphosphate binding. Histidine 124 contacts dimethylallyl diphosphate. Residue histidine 124 coordinates isopentenyl diphosphate. Glutamate 126 acts as the Proton donor in catalysis. Threonine 167 is a (2E)-4-hydroxy-3-methylbut-2-enyl diphosphate binding site. Cysteine 197 contacts [4Fe-4S] cluster. (2E)-4-hydroxy-3-methylbut-2-enyl diphosphate contacts are provided by serine 225, serine 226, asparagine 227, and serine 269. Positions 225, 226, 227, and 269 each coordinate dimethylallyl diphosphate. Isopentenyl diphosphate is bound by residues serine 225, serine 226, asparagine 227, and serine 269.

This sequence belongs to the IspH family. As to quaternary structure, homodimer. The cofactor is [4Fe-4S] cluster.

It carries out the reaction isopentenyl diphosphate + 2 oxidized [2Fe-2S]-[ferredoxin] + H2O = (2E)-4-hydroxy-3-methylbut-2-enyl diphosphate + 2 reduced [2Fe-2S]-[ferredoxin] + 2 H(+). The enzyme catalyses dimethylallyl diphosphate + 2 oxidized [2Fe-2S]-[ferredoxin] + H2O = (2E)-4-hydroxy-3-methylbut-2-enyl diphosphate + 2 reduced [2Fe-2S]-[ferredoxin] + 2 H(+). The protein operates within isoprenoid biosynthesis; dimethylallyl diphosphate biosynthesis; dimethylallyl diphosphate from (2E)-4-hydroxy-3-methylbutenyl diphosphate: step 1/1. It participates in isoprenoid biosynthesis; isopentenyl diphosphate biosynthesis via DXP pathway; isopentenyl diphosphate from 1-deoxy-D-xylulose 5-phosphate: step 6/6. Functionally, catalyzes the conversion of 1-hydroxy-2-methyl-2-(E)-butenyl 4-diphosphate (HMBPP) into a mixture of isopentenyl diphosphate (IPP) and dimethylallyl diphosphate (DMAPP). Acts in the terminal step of the DOXP/MEP pathway for isoprenoid precursor biosynthesis. The chain is 4-hydroxy-3-methylbut-2-enyl diphosphate reductase from Escherichia coli (strain ATCC 8739 / DSM 1576 / NBRC 3972 / NCIMB 8545 / WDCM 00012 / Crooks).